An 812-amino-acid polypeptide reads, in one-letter code: MAQILLHGTLHATIFEAESLSNPHRATGGAPKFIRKLVEGIEDTVGVGKGATKIYATVDLEKARVGRTRMISNEPVNPRWYESFHIYCAHMAADVIFTVKIDNSIGASLIGRAYLAVQDLLGGEEIDKWLEISDENREPVGDSKIHVKLQYFDVGKDRNWARGVRSTKYPGVPYTFFSQRQGCKVTLYQDAHVPDNFVPRIQLADGKNYEPHRCWEDIFDAISKAQHLIYITGWSVYTEITLVRDTNRPKPGGDVTLGELLKRKASEGVRVLMLVWDDRTSVGLLKKDGLMATHDEETANYFHGTDVNCVLCPRNPDDSGSFVQDLQISTMFTHHQKIVVVDHEMPNQGSQQRRIVSFIGGIDLCDGRYDTQYHSLFRTLDTVHHDDFHQPNFEGGSIKKGGPREPWHDIHSRLEGPIAWDVLYNFEQRWRKQGGKDLLVRLRDLPDIIIPPSPVMFPEDRETWNVQLFRSIDGGAAFGFPETPEEAARAGLVSGKDQIIDRSIQDAYVNAIRRAKNFIYIENQYFLGSSYGWKPEGIKPEEIGALHLIPKELSLKIVSKIEAGERFTVYVVVPMWPEGVPESASVQAILDWQRRTMEMMYTDIAQALEANGIEANPKDYLTFFCLGNREVKQEGEYEPEEHPEPDTDYIRAQEARRFMIYVHTKMMIVDDEYIIIGSANINQRSMDGARDSEIAMGAYQPYHLATRQPARGQIHGFRMSLWYEHLGMLEDVFQRPESVECVQKVNEVAEKYWDLYSSDDLEQDLPGHLLSYPIGVTADGSVTELPGMENFPDTRARVLGNKSDYLPPILTT.

One can recognise a C2 domain in the interval Met1–Leu130. Residue Asp190 participates in Ca(2+) binding. A PLD phosphodiesterase 1 domain is found at Thr330–Arg368. Active-site residues include His335, Lys337, and Asp342. A 1,2-diacyl-sn-glycero-3-phosphate is bound at residue His335. 2 residues coordinate Ca(2+): His374 and His408. Gln524 and His663 together coordinate a 1,2-diacyl-sn-glycero-3-phosphate. The 28-residue stretch at Phe658 to Ser685 folds into the PLD phosphodiesterase 2 domain. Active-site residues include His663, Lys665, and Asp670. Glu724 contributes to the Ca(2+) binding site.

This sequence belongs to the phospholipase D family. C2-PLD subfamily. In terms of assembly, monomer. The cofactor is Ca(2+).

The enzyme catalyses a 1,2-diacyl-sn-glycero-3-phosphocholine + H2O = a 1,2-diacyl-sn-glycero-3-phosphate + choline + H(+). Functionally, hydrolyzes glycerol-phospholipids at the terminal phosphodiesteric bond. Plays an important role in various cellular processes. The sequence is that of Phospholipase D alpha 1 (PLD1) from Zea mays (Maize).